The following is a 278-amino-acid chain: Toxin coregulated pilus biosynthesis protein D (278 aa).

A helical transmembrane segment spans residues 30 to 50 (LLVAIIFLVLSILGGGAYLYY).

It is found in the cell membrane. Its function is as follows. Involved in TCP pilus biogenesis. This Vibrio cholerae serotype O1 (strain ATCC 39315 / El Tor Inaba N16961) protein is Toxin coregulated pilus biosynthesis protein D (tcpD).